We begin with the raw amino-acid sequence, 284 residues long: Pantothenate synthetase (284 aa).

Position 30–37 (30–37 (MGNLHDGH)) interacts with ATP. The active-site Proton donor is the histidine 37. A (R)-pantoate-binding site is contributed by glutamine 61. Glutamine 61 is a beta-alanine binding site. 149-152 (GEKD) contributes to the ATP binding site. Glutamine 155 lines the (R)-pantoate pocket. ATP-binding positions include valine 178 and 186 to 189 (LSSR).

Belongs to the pantothenate synthetase family. As to quaternary structure, homodimer.

Its subcellular location is the cytoplasm. The enzyme catalyses (R)-pantoate + beta-alanine + ATP = (R)-pantothenate + AMP + diphosphate + H(+). Its pathway is cofactor biosynthesis; (R)-pantothenate biosynthesis; (R)-pantothenate from (R)-pantoate and beta-alanine: step 1/1. Its function is as follows. Catalyzes the condensation of pantoate with beta-alanine in an ATP-dependent reaction via a pantoyl-adenylate intermediate. The polypeptide is Pantothenate synthetase (Enterobacter sp. (strain 638)).